Here is a 99-residue protein sequence, read N- to C-terminus: Aspartyl/glutamyl-tRNA(Asn/Gln) amidotransferase subunit C (99 aa).

It belongs to the GatC family. Heterotrimer of A, B and C subunits.

The enzyme catalyses L-glutamyl-tRNA(Gln) + L-glutamine + ATP + H2O = L-glutaminyl-tRNA(Gln) + L-glutamate + ADP + phosphate + H(+). It catalyses the reaction L-aspartyl-tRNA(Asn) + L-glutamine + ATP + H2O = L-asparaginyl-tRNA(Asn) + L-glutamate + ADP + phosphate + 2 H(+). Functionally, allows the formation of correctly charged Asn-tRNA(Asn) or Gln-tRNA(Gln) through the transamidation of misacylated Asp-tRNA(Asn) or Glu-tRNA(Gln) in organisms which lack either or both of asparaginyl-tRNA or glutaminyl-tRNA synthetases. The reaction takes place in the presence of glutamine and ATP through an activated phospho-Asp-tRNA(Asn) or phospho-Glu-tRNA(Gln). This is Aspartyl/glutamyl-tRNA(Asn/Gln) amidotransferase subunit C from Polaromonas sp. (strain JS666 / ATCC BAA-500).